The following is a 317-amino-acid chain: MPKPGVFNFVNKATWDARNALGSLPKETARKNYVDLVSSLSSSSEAPSQGKRGADEKARESKDILVTSEDGITKITFNRPTKKNAISFQMYLDIMHALKNASTDNSVITVFTGTGDYYSSGNDLKNLINDAGEIQDVVATSTKILREFVNCFIDFPKPLVAVVNGPAVGIAVTILALFDAVFASDRATFHTPFSQLSQIPEACSTYMFPKIMGPTKAAEMLLFGKKLTAREAWAQGLVTEVFPESTFETEVWTRLKTYSKLSPNVMRISKELIRKHEKQKLYTVNAEECAAALERMPREEYAKALRNFLFRKAKAKL.

The region spanning 1-46 (MPKPGVFNFVNKATWDARNALGSLPKETARKNYVDLVSSLSSSSEA) is the ACB domain. A disordered region spans residues 40–60 (LSSSSEAPSQGKRGADEKARE). Residue 120 to 124 (SGNDL) participates in substrate binding. The Microbody targeting signal motif lies at 315–317 (AKL).

This sequence belongs to the enoyl-CoA hydratase/isomerase family. As to expression, expressed at high levels in the kidney. Also detected at very low levels in the duodenum, jejunum, ileum, heart, liver, lung, and brown adipose tissue (at protein level). In the kidney, expression seems to be localized mainly to the proximal tubule.

The protein resides in the peroxisome. It carries out the reaction a (3Z)-enoyl-CoA = a 4-saturated (2E)-enoyl-CoA. The enzyme catalyses a (3E)-enoyl-CoA = a 4-saturated (2E)-enoyl-CoA. It catalyses the reaction (3E)-nonenoyl-CoA = (2E)-nonenoyl-CoA. In terms of biological role, catalyzes the isomerization of trans-3-nonenoyl-CoA into trans-2-nonenoyl-CoA. May also have activity towards other enoyl-CoA species. The protein is Enoyl-CoA delta isomerase 3, peroxisomal of Mus musculus (Mouse).